The chain runs to 542 residues: CTP synthase (542 aa).

The amidoligase domain stretch occupies residues Met-1–Ile-265. Ser-13 contacts CTP. Ser-13 contacts UTP. Position 14-19 (Ser-14–Ile-19) interacts with ATP. Position 54 (Tyr-54) interacts with L-glutamine. Residue Asp-71 participates in ATP binding. Mg(2+) contacts are provided by Asp-71 and Glu-139. CTP contacts are provided by residues Asp-146–Glu-148, Lys-186–Gln-191, and Lys-222. UTP-binding positions include Lys-186–Gln-191 and Lys-222. In terms of domain architecture, Glutamine amidotransferase type-1 spans Thr-291 to Leu-541. An L-glutamine-binding site is contributed by Gly-353. Cys-380 serves as the catalytic Nucleophile; for glutamine hydrolysis. Residues Phe-381–Gln-384, Glu-404, and Arg-469 contribute to the L-glutamine site. Residues His-514 and Glu-516 contribute to the active site.

This sequence belongs to the CTP synthase family. As to quaternary structure, homotetramer.

The enzyme catalyses UTP + L-glutamine + ATP + H2O = CTP + L-glutamate + ADP + phosphate + 2 H(+). The catalysed reaction is L-glutamine + H2O = L-glutamate + NH4(+). It carries out the reaction UTP + NH4(+) + ATP = CTP + ADP + phosphate + 2 H(+). Its pathway is pyrimidine metabolism; CTP biosynthesis via de novo pathway; CTP from UDP: step 2/2. Its activity is regulated as follows. Allosterically activated by GTP, when glutamine is the substrate; GTP has no effect on the reaction when ammonia is the substrate. The allosteric effector GTP functions by stabilizing the protein conformation that binds the tetrahedral intermediate(s) formed during glutamine hydrolysis. Inhibited by the product CTP, via allosteric rather than competitive inhibition. In terms of biological role, catalyzes the ATP-dependent amination of UTP to CTP with either L-glutamine or ammonia as the source of nitrogen. Regulates intracellular CTP levels through interactions with the four ribonucleotide triphosphates. The chain is CTP synthase from Brucella canis (strain ATCC 23365 / NCTC 10854 / RM-666).